A 404-amino-acid polypeptide reads, in one-letter code: Cysteine desulfurase IscS (404 aa).

Pyridoxal 5'-phosphate-binding positions include 73–74 (AT), Asn153, Gln181, and 201–203 (SAH). Position 204 is an N6-(pyridoxal phosphate)lysine (Lys204). A pyridoxal 5'-phosphate-binding site is contributed by Thr241. The active-site Cysteine persulfide intermediate is the Cys327. Residue Cys327 participates in [2Fe-2S] cluster binding.

It belongs to the class-V pyridoxal-phosphate-dependent aminotransferase family. NifS/IscS subfamily. In terms of assembly, homodimer. Forms a heterotetramer with IscU, interacts with other sulfur acceptors. Requires pyridoxal 5'-phosphate as cofactor.

It localises to the cytoplasm. The catalysed reaction is (sulfur carrier)-H + L-cysteine = (sulfur carrier)-SH + L-alanine. Its pathway is cofactor biosynthesis; iron-sulfur cluster biosynthesis. Its function is as follows. Master enzyme that delivers sulfur to a number of partners involved in Fe-S cluster assembly, tRNA modification or cofactor biosynthesis. Catalyzes the removal of elemental sulfur atoms from cysteine to produce alanine. Functions as a sulfur delivery protein for Fe-S cluster synthesis onto IscU, an Fe-S scaffold assembly protein, as well as other S acceptor proteins. This chain is Cysteine desulfurase IscS, found in Anaeromyxobacter sp. (strain Fw109-5).